Consider the following 591-residue polypeptide: Proteasome-associated ATPase (591 aa).

Residues 10-77 (VAAAEELHAL…LREEVDRLGQ (68 aa)) adopt a coiled-coil conformation. 278–283 (GCGKTL) lines the ATP pocket. Residues 590–591 (YL) are docks into pockets in the proteasome alpha-ring.

It belongs to the AAA ATPase family. Homohexamer. Assembles into a hexameric ring structure that likely caps the 20S proteasome core. Can form a complex composed of two stacked hexameric rings in vitro. Probably interacts with the prokaryotic ubiquitin-like protein Pup through a hydrophobic interface; the expected interacting region of ARC lies in its N-terminal coiled-coil domain. There is likely one Pup binding site per ARC hexamer ring. Upon ATP-binding, the C-terminus of ARC probably interacts with the alpha-rings of the proteasome core, possibly by binding to the intersubunit pockets.

Its pathway is protein degradation; proteasomal Pup-dependent pathway. Its activity is regulated as follows. ATPase activity is inhibited by N-ethylmaleimide (NEM) but not by sodium azide. In terms of biological role, ATPase which is responsible for recognizing, binding, unfolding and translocation of pupylated proteins into the bacterial 20S proteasome core particle. May be essential for opening the gate of the 20S proteasome via an interaction with its C-terminus, thereby allowing substrate entry and access to the site of proteolysis. Thus, the C-termini of the proteasomal ATPase may function like a 'key in a lock' to induce gate opening and therefore regulate proteolysis. This Rhodococcus erythropolis (Arthrobacter picolinophilus) protein is Proteasome-associated ATPase.